A 338-amino-acid polypeptide reads, in one-letter code: Ferrochelatase (338 aa).

Fe cation-binding residues include H189 and E294.

Belongs to the ferrochelatase family.

It localises to the cytoplasm. It catalyses the reaction heme b + 2 H(+) = protoporphyrin IX + Fe(2+). It functions in the pathway porphyrin-containing compound metabolism; protoheme biosynthesis; protoheme from protoporphyrin-IX: step 1/1. In terms of biological role, catalyzes the ferrous insertion into protoporphyrin IX. The sequence is that of Ferrochelatase from Pseudomonas putida (strain ATCC 700007 / DSM 6899 / JCM 31910 / BCRC 17059 / LMG 24140 / F1).